The sequence spans 245 residues: tRNA pseudouridine synthase A (245 aa).

Asp52 functions as the Nucleophile in the catalytic mechanism. Tyr111 provides a ligand contact to substrate.

The protein belongs to the tRNA pseudouridine synthase TruA family. As to quaternary structure, homodimer.

It carries out the reaction uridine(38/39/40) in tRNA = pseudouridine(38/39/40) in tRNA. Functionally, formation of pseudouridine at positions 38, 39 and 40 in the anticodon stem and loop of transfer RNAs. The sequence is that of tRNA pseudouridine synthase A from Ehrlichia canis (strain Jake).